A 156-amino-acid polypeptide reads, in one-letter code: 6,7-dimethyl-8-ribityllumazine synthase (156 aa).

5-amino-6-(D-ribitylamino)uracil-binding positions include F22, 57 to 59, and 81 to 83; these read AYE and TVI. Residue 86–87 coordinates (2S)-2-hydroxy-3-oxobutyl phosphate; it reads GT. H89 (proton donor) is an active-site residue. Residue F114 coordinates 5-amino-6-(D-ribitylamino)uracil. R128 serves as a coordination point for (2S)-2-hydroxy-3-oxobutyl phosphate.

It belongs to the DMRL synthase family. Forms an icosahedral capsid composed of 60 subunits, arranged as a dodecamer of pentamers.

The enzyme catalyses (2S)-2-hydroxy-3-oxobutyl phosphate + 5-amino-6-(D-ribitylamino)uracil = 6,7-dimethyl-8-(1-D-ribityl)lumazine + phosphate + 2 H2O + H(+). Its pathway is cofactor biosynthesis; riboflavin biosynthesis; riboflavin from 2-hydroxy-3-oxobutyl phosphate and 5-amino-6-(D-ribitylamino)uracil: step 1/2. Catalyzes the formation of 6,7-dimethyl-8-ribityllumazine by condensation of 5-amino-6-(D-ribitylamino)uracil with 3,4-dihydroxy-2-butanone 4-phosphate. This is the penultimate step in the biosynthesis of riboflavin. This Cronobacter sakazakii (strain ATCC BAA-894) (Enterobacter sakazakii) protein is 6,7-dimethyl-8-ribityllumazine synthase.